The sequence spans 143 residues: Putative nickel-responsive regulator (143 aa).

Histidine 82, histidine 97, histidine 99, and cysteine 105 together coordinate Ni(2+).

The protein belongs to the transcriptional regulatory CopG/NikR family. It depends on Ni(2+) as a cofactor.

Its function is as follows. Transcriptional regulator. The protein is Putative nickel-responsive regulator of Helicobacter hepaticus (strain ATCC 51449 / 3B1).